A 502-amino-acid polypeptide reads, in one-letter code: ATP synthase subunit alpha (502 aa).

Position 169–176 (169–176 (GDRQTGKT)) interacts with ATP.

The protein belongs to the ATPase alpha/beta chains family. In terms of assembly, F-type ATPases have 2 components, CF(1) - the catalytic core - and CF(0) - the membrane proton channel. CF(1) has five subunits: alpha(3), beta(3), gamma(1), delta(1), epsilon(1). CF(0) has three main subunits: a(1), b(2) and c(9-12). The alpha and beta chains form an alternating ring which encloses part of the gamma chain. CF(1) is attached to CF(0) by a central stalk formed by the gamma and epsilon chains, while a peripheral stalk is formed by the delta and b chains.

Its subcellular location is the cell inner membrane. The catalysed reaction is ATP + H2O + 4 H(+)(in) = ADP + phosphate + 5 H(+)(out). In terms of biological role, produces ATP from ADP in the presence of a proton gradient across the membrane. The alpha chain is a regulatory subunit. The polypeptide is ATP synthase subunit alpha (Pelobacter propionicus (strain DSM 2379 / NBRC 103807 / OttBd1)).